The sequence spans 633 residues: Probable potassium transport system protein Kup 2 (633 aa).

The next 11 membrane-spanning stretches (helical) occupy residues 59–79 (ISAI…ILIM), 110–130 (ILLV…LTPA), 145–165 (TALQ…LFLF), 173–193 (IGAL…AAGI), 219–239 (GFAS…AEAL), 256–276 (FGLV…LIIV), 287–307 (LLYP…ATVI), 345–365 (IYIP…VLGF), 374–394 (AYGV…FFVI), 402–422 (LLLS…FVSS), and 429–449 (EGGW…LTWV).

Belongs to the HAK/KUP transporter (TC 2.A.72) family.

Its subcellular location is the cell inner membrane. The enzyme catalyses K(+)(in) + H(+)(in) = K(+)(out) + H(+)(out). Transport of potassium into the cell. Likely operates as a K(+):H(+) symporter. This is Probable potassium transport system protein Kup 2 from Cupriavidus necator (strain ATCC 17699 / DSM 428 / KCTC 22496 / NCIMB 10442 / H16 / Stanier 337) (Ralstonia eutropha).